We begin with the raw amino-acid sequence, 470 residues long: Pyruvate kinase I (470 aa).

Arginine 32 is a substrate binding site. Asparagine 34, serine 36, aspartate 66, and threonine 67 together coordinate K(+). Position 34-37 (34-37 (NFSH)) interacts with ATP. Residues arginine 73 and lysine 156 each coordinate ATP. Glutamate 222 lines the Mg(2+) pocket. Residues glycine 245, aspartate 246, and threonine 278 each contribute to the substrate site. Position 246 (aspartate 246) interacts with Mg(2+).

Belongs to the pyruvate kinase family. Homotetramer. It depends on Mg(2+) as a cofactor. K(+) is required as a cofactor.

The catalysed reaction is pyruvate + ATP = phosphoenolpyruvate + ADP + H(+). It participates in carbohydrate degradation; glycolysis; pyruvate from D-glyceraldehyde 3-phosphate: step 5/5. This Salmonella typhi protein is Pyruvate kinase I (pykF).